A 130-amino-acid polypeptide reads, in one-letter code: Small ribosomal subunit protein uS9 (130 aa).

It belongs to the universal ribosomal protein uS9 family.

This chain is Small ribosomal subunit protein uS9, found in Shewanella sediminis (strain HAW-EB3).